The following is a 78-amino-acid chain: Sec-independent protein translocase protein TatA (78 aa).

A helical transmembrane segment spans residues 1-21; that stretch reads MFGRIGLPEILLILAIALIIF. The tract at residues 50-78 is disordered; sequence EVNEVEEEVKENKSSDVKENEDNKTEKST. The segment covering 59–78 has biased composition (basic and acidic residues); the sequence is KENKSSDVKENEDNKTEKST.

It belongs to the TatA/E family. Forms a complex with TatC.

It localises to the cell membrane. Part of the twin-arginine translocation (Tat) system that transports large folded proteins containing a characteristic twin-arginine motif in their signal peptide across membranes. TatA could form the protein-conducting channel of the Tat system. The sequence is that of Sec-independent protein translocase protein TatA from Natranaerobius thermophilus (strain ATCC BAA-1301 / DSM 18059 / JW/NM-WN-LF).